A 141-amino-acid polypeptide reads, in one-letter code: Oleosin 14.9 kDa (141 aa).

Residues 1–22 (MADQTRTHHEMISRDSTQEAHP) are compositionally biased toward basic and acidic residues. Residues 1–24 (MADQTRTHHEMISRDSTQEAHPKA) form a disordered region. Positions 1 to 29 (MADQTRTHHEMISRDSTQEAHPKARQMVK) are polar. The hydrophobic stretch occupies residues 30–141 (AATAVTAGGS…NIGVQHQQVS (112 aa)). 3 helical membrane passes run 38–58 (GSLL…LTVA), 60–80 (PLLV…ALII), and 81–101 (TGFL…SWLY).

This sequence belongs to the oleosin family.

It is found in the lipid droplet. The protein localises to the membrane. Functionally, may have a structural role to stabilize the lipid body during desiccation of the seed by preventing coalescence of the oil. Probably interacts with both lipid and phospholipid moieties of lipid bodies. May also provide recognition signals for specific lipase anchorage in lipolysis during seedling growth. This Arabidopsis thaliana (Mouse-ear cress) protein is Oleosin 14.9 kDa (OL3).